The chain runs to 449 residues: Sensor histidine protein kinase/phosphatase WalK (449 aa).

At 1-13 (MLDLLKQTIFTRD) the chain is on the extracellular side. A helical transmembrane segment spans residues 14 to 34 (FIFILILLGFILVVTLLLLEN). Positions 35–87 (RRDNIQLKQINQKVKDLIAGDYSKVLDMQGGSEITNITNNLNDLSEVIRLTQE) constitute an HAMP domain. Residues 35-449 (RRDNIQLKQI…EEVWEDEVED (415 aa)) are Cytoplasmic-facing. The 67-residue stretch at 92–158 (ESKRLNSILF…YELRDLITQS (67 aa)) folds into the PAS domain. The 55-residue stretch at 157–211 (QSPELLLDSQDINGEYLNLRVRFALIRRESGFISGLVAVLHDTTEQEKEERERRL) folds into the PAC domain. Residues 215 to 435 (NVSHELRTPL…TFTIVLPYDK (221 aa)) form the Histidine kinase domain. Position 218 is a phosphohistidine (H218).

May form homodimers. May interact with serine/threonine-protein kinase StkP; the interaction may play a role in regulating Walk signal transduction. In terms of processing, autophosphorylated.

The protein resides in the membrane. It carries out the reaction ATP + protein L-histidine = ADP + protein N-phospho-L-histidine.. In terms of biological role, member of the two-component regulatory system WalK/WalR that regulates genes involved in cell wall metabolism. Functions as a sensor protein kinase which is autophosphorylated at a histidine residue and transfers its phosphate group to WalR. In turn, WalR binds to the upstream promoter regions of target genes to positively and negatively regulate their expression. Required to maintain expression of WalRK regulon genes in exponentially growing cells, including peptidoglycan hydrolase pcsB. Phosphorylates WalR and also capable of dephosphorylation of WalR. WalK phosphatase activity is probably involved in preventing cross-talk from PnpS and other non-cognate sensor kinases during exponential growth. May be considered a potential virulence factor. The chain is Sensor histidine protein kinase/phosphatase WalK from Streptococcus pneumoniae serotype 2 (strain D39 / NCTC 7466).